The sequence spans 413 residues: Argininosuccinate synthase (413 aa).

Residues 14 to 22 (AYSGGLDTS) and Ala41 contribute to the ATP site. Tyr94 and Ser99 together coordinate L-citrulline. Residue Gly124 participates in ATP binding. L-aspartate is bound by residues Thr126, Asn130, and Asp131. Asn130 contacts L-citrulline. Residues Arg134, Ser185, Ser194, Glu270, and Tyr282 each contribute to the L-citrulline site.

Belongs to the argininosuccinate synthase family. Type 1 subfamily. In terms of assembly, homotetramer.

It is found in the cytoplasm. The enzyme catalyses L-citrulline + L-aspartate + ATP = 2-(N(omega)-L-arginino)succinate + AMP + diphosphate + H(+). It functions in the pathway amino-acid biosynthesis; L-arginine biosynthesis; L-arginine from L-ornithine and carbamoyl phosphate: step 2/3. The protein is Argininosuccinate synthase of Hyphomonas neptunium (strain ATCC 15444).